The following is a 385-amino-acid chain: tRNA-specific 2-thiouridylase MnmA (385 aa).

ATP is bound by residues 8–15 (AMSGGVDS) and L34. Residue C102 is the Nucleophile of the active site. Cysteines 102 and 200 form a disulfide. An ATP-binding site is contributed by G126. The segment at 150–152 (KDQ) is interaction with tRNA. C200 acts as the Cysteine persulfide intermediate in catalysis. An interaction with tRNA region spans residues 307 to 308 (RY).

This sequence belongs to the MnmA/TRMU family.

The protein localises to the cytoplasm. The catalysed reaction is S-sulfanyl-L-cysteinyl-[protein] + uridine(34) in tRNA + AH2 + ATP = 2-thiouridine(34) in tRNA + L-cysteinyl-[protein] + A + AMP + diphosphate + H(+). Its function is as follows. Catalyzes the 2-thiolation of uridine at the wobble position (U34) of tRNA, leading to the formation of s(2)U34. The sequence is that of tRNA-specific 2-thiouridylase MnmA from Heliobacterium modesticaldum (strain ATCC 51547 / Ice1).